The following is a 210-amino-acid chain: Na(+)-translocating NADH-quinone reductase subunit D (210 aa).

The next 6 helical transmembrane spans lie at 11–31 (ILAPVLDNNPIALQVLGVCSA), 42–62 (FVMTIAVMFVTALSNFFVSLI), 72–92 (IIVQMAIIASLVIVVDQVLKA), 103–123 (VFVGLIITNCIVMGRAEAFAM), 131–151 (FIDGLGNGLGYGFVLITVGFF), and 178–198 (NGLMLLAPSAFFLIGFLIWAI).

It belongs to the NqrDE/RnfAE family. Composed of six subunits; NqrA, NqrB, NqrC, NqrD, NqrE and NqrF.

The protein localises to the cell inner membrane. The catalysed reaction is a ubiquinone + n Na(+)(in) + NADH + H(+) = a ubiquinol + n Na(+)(out) + NAD(+). In terms of biological role, NQR complex catalyzes the reduction of ubiquinone-1 to ubiquinol by two successive reactions, coupled with the transport of Na(+) ions from the cytoplasm to the periplasm. NqrA to NqrE are probably involved in the second step, the conversion of ubisemiquinone to ubiquinol. This is Na(+)-translocating NADH-quinone reductase subunit D from Vibrio atlanticus (strain LGP32) (Vibrio splendidus (strain Mel32)).